Here is a 127-residue protein sequence, read N- to C-terminus: Protein ApaG (127 aa).

The ApaG domain maps to 3-127; that stretch reads ESEKYRIEVE…FMLAMPRVLH (125 aa).

The chain is Protein ApaG from Aromatoleum aromaticum (strain DSM 19018 / LMG 30748 / EbN1) (Azoarcus sp. (strain EbN1)).